The following is a 338-amino-acid chain: Bifunctional methylenetetrahydrofolate dehydrogenase/cyclohydrolase 2, mitochondrial (338 aa).

Substrate contacts are provided by residues 89 to 93 (YVRNK) and 136 to 138 (VQL). Residues 205–207 (GRS) and arginine 238 contribute to the NAD(+) site. 314 to 318 (PGGVG) serves as a coordination point for substrate.

The protein belongs to the tetrahydrofolate dehydrogenase/cyclohydrolase family. It depends on Mg(2+) as a cofactor. As to expression, widely expressed.

The protein localises to the mitochondrion inner membrane. The catalysed reaction is (6R)-5,10-methylene-5,6,7,8-tetrahydrofolate + NAD(+) = (6R)-5,10-methenyltetrahydrofolate + NADH. It catalyses the reaction (6R)-5,10-methenyltetrahydrofolate + H2O = (6R)-10-formyltetrahydrofolate + H(+). It carries out the reaction (6R)-5,10-methylene-5,6,7,8-tetrahydrofolate + NADP(+) = (6R)-5,10-methenyltetrahydrofolate + NADPH. It functions in the pathway one-carbon metabolism; tetrahydrofolate interconversion. In terms of biological role, bifunctional mitochondrial folate-interconverting enzyme that has both NAD/NADP-dependent methylenetetrahydrofolate dehydrogenase and methenyltetrahydrofolate cyclohydrolase activities. The polypeptide is Bifunctional methylenetetrahydrofolate dehydrogenase/cyclohydrolase 2, mitochondrial (Mus musculus (Mouse)).